A 349-amino-acid chain; its full sequence is tRNA pseudouridine synthase D (349 aa).

Substrate is bound at residue Phe-27. Asp-80 (nucleophile) is an active-site residue. Asn-129 provides a ligand contact to substrate. Residues 155-303 (GVPNYFGAQR…VEAARRAMLL (149 aa)) enclose the TRUD domain. A substrate-binding site is contributed by Phe-329.

It belongs to the pseudouridine synthase TruD family.

The catalysed reaction is uridine(13) in tRNA = pseudouridine(13) in tRNA. Its function is as follows. Responsible for synthesis of pseudouridine from uracil-13 in transfer RNAs. The polypeptide is tRNA pseudouridine synthase D (Klebsiella pneumoniae subsp. pneumoniae (strain ATCC 700721 / MGH 78578)).